The primary structure comprises 227 residues: Cytochrome c oxidase subunit 2 (227 aa).

Residues 1 to 14 (MAYPYELGFQDASS) lie on the Mitochondrial intermembrane side of the membrane. The chain crosses the membrane as a helical span at residues 15–45 (PIMEELLHFHDHTLMIVFLISTLVLYLITIM). Over 46–59 (LTTKLTHTSTMDAQ) the chain is Mitochondrial matrix. The helical transmembrane segment at 60 to 87 (EIETIWTILPAIILILIALPSLRILYMM) threads the bilayer. The Mitochondrial intermembrane portion of the chain corresponds to 88 to 227 (DEINSPSLTV…DFEIWSSSML (140 aa)). Cu cation contacts are provided by His-161, Cys-196, Glu-198, Cys-200, His-204, and Met-207. Glu-198 contacts Mg(2+).

It belongs to the cytochrome c oxidase subunit 2 family. As to quaternary structure, component of the cytochrome c oxidase (complex IV, CIV), a multisubunit enzyme composed of 14 subunits. The complex is composed of a catalytic core of 3 subunits MT-CO1, MT-CO2 and MT-CO3, encoded in the mitochondrial DNA, and 11 supernumerary subunits COX4I, COX5A, COX5B, COX6A, COX6B, COX6C, COX7A, COX7B, COX7C, COX8 and NDUFA4, which are encoded in the nuclear genome. The complex exists as a monomer or a dimer and forms supercomplexes (SCs) in the inner mitochondrial membrane with NADH-ubiquinone oxidoreductase (complex I, CI) and ubiquinol-cytochrome c oxidoreductase (cytochrome b-c1 complex, complex III, CIII), resulting in different assemblies (supercomplex SCI(1)III(2)IV(1) and megacomplex MCI(2)III(2)IV(2)). Found in a complex with TMEM177, COA6, COX18, COX20, SCO1 and SCO2. Interacts with TMEM177 in a COX20-dependent manner. Interacts with COX20. Interacts with COX16. Cu cation is required as a cofactor.

It is found in the mitochondrion inner membrane. The catalysed reaction is 4 Fe(II)-[cytochrome c] + O2 + 8 H(+)(in) = 4 Fe(III)-[cytochrome c] + 2 H2O + 4 H(+)(out). Its function is as follows. Component of the cytochrome c oxidase, the last enzyme in the mitochondrial electron transport chain which drives oxidative phosphorylation. The respiratory chain contains 3 multisubunit complexes succinate dehydrogenase (complex II, CII), ubiquinol-cytochrome c oxidoreductase (cytochrome b-c1 complex, complex III, CIII) and cytochrome c oxidase (complex IV, CIV), that cooperate to transfer electrons derived from NADH and succinate to molecular oxygen, creating an electrochemical gradient over the inner membrane that drives transmembrane transport and the ATP synthase. Cytochrome c oxidase is the component of the respiratory chain that catalyzes the reduction of oxygen to water. Electrons originating from reduced cytochrome c in the intermembrane space (IMS) are transferred via the dinuclear copper A center (CU(A)) of subunit 2 and heme A of subunit 1 to the active site in subunit 1, a binuclear center (BNC) formed by heme A3 and copper B (CU(B)). The BNC reduces molecular oxygen to 2 water molecules using 4 electrons from cytochrome c in the IMS and 4 protons from the mitochondrial matrix. The polypeptide is Cytochrome c oxidase subunit 2 (MT-CO2) (Cavia aperea (Brazilian guinea pig)).